The following is a 292-amino-acid chain: Homoserine kinase (292 aa).

84 to 94 (PLSRGLGSSSA) contacts ATP.

The protein belongs to the GHMP kinase family. Homoserine kinase subfamily.

The protein resides in the cytoplasm. The catalysed reaction is L-homoserine + ATP = O-phospho-L-homoserine + ADP + H(+). Its pathway is amino-acid biosynthesis; L-threonine biosynthesis; L-threonine from L-aspartate: step 4/5. Its function is as follows. Catalyzes the ATP-dependent phosphorylation of L-homoserine to L-homoserine phosphate. The chain is Homoserine kinase from Campylobacter jejuni subsp. doylei (strain ATCC BAA-1458 / RM4099 / 269.97).